Consider the following 313-residue polypeptide: Beta-ketoacyl-[acyl-carrier-protein] synthase III (313 aa).

Residues Cys112 and His238 contribute to the active site. Positions 239-243 are ACP-binding; that stretch reads QANIR. Asn268 is an active-site residue.

This sequence belongs to the thiolase-like superfamily. FabH family. Homodimer.

It localises to the cytoplasm. It catalyses the reaction malonyl-[ACP] + acetyl-CoA + H(+) = 3-oxobutanoyl-[ACP] + CO2 + CoA. It functions in the pathway lipid metabolism; fatty acid biosynthesis. Catalyzes the condensation reaction of fatty acid synthesis by the addition to an acyl acceptor of two carbons from malonyl-ACP. Catalyzes the first condensation reaction which initiates fatty acid synthesis and may therefore play a role in governing the total rate of fatty acid production. Possesses both acetoacetyl-ACP synthase and acetyl transacylase activities. Its substrate specificity determines the biosynthesis of branched-chain and/or straight-chain of fatty acids. The polypeptide is Beta-ketoacyl-[acyl-carrier-protein] synthase III (Staphylococcus aureus (strain bovine RF122 / ET3-1)).